An 879-amino-acid polypeptide reads, in one-letter code: MKFMKTNDLREAYLKFFESKDHLRMDSFSLVPKNDKSLLLINAGMAPLKPYFTGLQEPPKRRITTCQKCIRTGDIENVGITSRHGTFFEMLGNFSFADYFKKEIIPWAWEFITEVLELPKDRLYVTIYLDDDEAYEYWTTLTDVDKTHIFRLGKEDNFWEHGAGPCGPCTEIHFNRSEEIPTNADEFVKLADEDKIIEFWNLVFTQFDGDGKGNYEKLANTNIDTGMGLERLATIMQEKNSIFEIDTLENILSEVAKLANVKYGENQKTDISLRLITDHIRSITFMISDDVMPSNEGRGYVLRRLLRRAARHGKTLGIKEAFLCNLCDTVIRDSSEAYPELNSKKEYIKKVIKIEEDKFRETLDSGMEILNGFISELKAKNEKVLSGVDGFKLYDTFGFPMELTKEILEDEGLSLDEDAFHEEMKVQRERARSARKVSNYMGTDVKTLDIIPAEVETVFDGYDNDTLNAEVKVLIEGEDFTDAITEGNKAIIVTDVTPLYAEMGGQIGDTGVIFNDGFKANVLDTKKNIGGKIVHFVEVVSGELKVGDTVTIEVDKVRRENIKKNHTATHLLDKALTEVLGSHVHQAGSYVSNDRLRFDFSHFEAMTEEEINKVEDLVNEAITSVTPVVTEVMDLQEAKNSGAIGIFDDKYADKVRVVSAGEYSKELCGGTHIDNTGKIGLFKIISESGIAAGTRRIEAVIGKEAYKIVNEKKDLLKEISTKLKCSEKELLAKLDQQVKELKEKDKEITALKSKFASMGIDDIVSSSRNVKDINVISYELKDVDSDTLRDVCEKVRDKAPNSIVLLMSANAGKVIICAMATKDAVAKGAHCGKLIKEISSMLGGGGGGRPDMAQAGGKMPEKIQEAIEESYKIVETLAK.

Zn(2+) contacts are provided by histidine 566, histidine 570, cysteine 668, and histidine 672.

It belongs to the class-II aminoacyl-tRNA synthetase family. The cofactor is Zn(2+).

It localises to the cytoplasm. The enzyme catalyses tRNA(Ala) + L-alanine + ATP = L-alanyl-tRNA(Ala) + AMP + diphosphate. Catalyzes the attachment of alanine to tRNA(Ala) in a two-step reaction: alanine is first activated by ATP to form Ala-AMP and then transferred to the acceptor end of tRNA(Ala). Also edits incorrectly charged Ser-tRNA(Ala) and Gly-tRNA(Ala) via its editing domain. In Clostridium beijerinckii (strain ATCC 51743 / NCIMB 8052) (Clostridium acetobutylicum), this protein is Alanine--tRNA ligase.